A 334-amino-acid polypeptide reads, in one-letter code: DNA-directed RNA polymerase subunit alpha (334 aa).

The tract at residues 1–234 (MQRSVHELLT…QQLAVFVDFD (234 aa)) is alpha N-terminal domain (alpha-NTD). Positions 248 to 334 (IDPILLRPVD…LRGDDRVLGG (87 aa)) are alpha C-terminal domain (alpha-CTD).

The protein belongs to the RNA polymerase alpha chain family. As to quaternary structure, homodimer. The RNAP catalytic core consists of 2 alpha, 1 beta, 1 beta' and 1 omega subunit. When a sigma factor is associated with the core the holoenzyme is formed, which can initiate transcription.

The enzyme catalyses RNA(n) + a ribonucleoside 5'-triphosphate = RNA(n+1) + diphosphate. In terms of biological role, DNA-dependent RNA polymerase catalyzes the transcription of DNA into RNA using the four ribonucleoside triphosphates as substrates. In Marinobacter nauticus (strain ATCC 700491 / DSM 11845 / VT8) (Marinobacter aquaeolei), this protein is DNA-directed RNA polymerase subunit alpha.